A 729-amino-acid polypeptide reads, in one-letter code: Fatty acid oxidation complex subunit alpha (729 aa).

The interval 1-189 (MLYKGDTLYL…KIGLVDGVVK (189 aa)) is enoyl-CoA hydratase/isomerase. Substrate is bound at residue D296. Residues 311-729 (ETPKQAAVLG…ARPVGSLKTA (419 aa)) form a 3-hydroxyacyl-CoA dehydrogenase region. NAD(+) is bound by residues M324, D343, 400–402 (VVE), K407, and S429. The For 3-hydroxyacyl-CoA dehydrogenase activity role is filled by H450. N453 is an NAD(+) binding site. Positions 500 and 660 each coordinate substrate. The tract at residues 708–729 (RHNEPYYPPVEPARPVGSLKTA) is disordered.

It in the N-terminal section; belongs to the enoyl-CoA hydratase/isomerase family. The protein in the C-terminal section; belongs to the 3-hydroxyacyl-CoA dehydrogenase family. As to quaternary structure, heterotetramer of two alpha chains (FadB) and two beta chains (FadA).

The catalysed reaction is a (3S)-3-hydroxyacyl-CoA + NAD(+) = a 3-oxoacyl-CoA + NADH + H(+). It catalyses the reaction a (3S)-3-hydroxyacyl-CoA = a (2E)-enoyl-CoA + H2O. The enzyme catalyses a 4-saturated-(3S)-3-hydroxyacyl-CoA = a (3E)-enoyl-CoA + H2O. It carries out the reaction (3S)-3-hydroxybutanoyl-CoA = (3R)-3-hydroxybutanoyl-CoA. The catalysed reaction is a (3Z)-enoyl-CoA = a 4-saturated (2E)-enoyl-CoA. It catalyses the reaction a (3E)-enoyl-CoA = a 4-saturated (2E)-enoyl-CoA. Its pathway is lipid metabolism; fatty acid beta-oxidation. Involved in the aerobic and anaerobic degradation of long-chain fatty acids via beta-oxidation cycle. Catalyzes the formation of 3-oxoacyl-CoA from enoyl-CoA via L-3-hydroxyacyl-CoA. It can also use D-3-hydroxyacyl-CoA and cis-3-enoyl-CoA as substrate. This Salmonella enteritidis PT4 (strain P125109) protein is Fatty acid oxidation complex subunit alpha.